Consider the following 179-residue polypeptide: Large ribosomal subunit protein uL6 (179 aa).

The protein belongs to the universal ribosomal protein uL6 family. As to quaternary structure, part of the 50S ribosomal subunit.

This protein binds to the 23S rRNA, and is important in its secondary structure. It is located near the subunit interface in the base of the L7/L12 stalk, and near the tRNA binding site of the peptidyltransferase center. The polypeptide is Large ribosomal subunit protein uL6 (Solidesulfovibrio magneticus (strain ATCC 700980 / DSM 13731 / RS-1) (Desulfovibrio magneticus)).